The primary structure comprises 65 residues: Large ribosomal subunit protein uL29 (65 aa).

It belongs to the universal ribosomal protein uL29 family.

In Thioalkalivibrio sulfidiphilus (strain HL-EbGR7), this protein is Large ribosomal subunit protein uL29.